Reading from the N-terminus, the 349-residue chain is Core protein VP7 (349 aa).

N287 is a glycosylation site (N-linked (GlcNAc...) asparagine; by host).

It belongs to the orbivirus VP7 family. In terms of assembly, homotrimer that assemble in a complex of 260 capsomers on an inner scaffold composed of VP3.

The protein localises to the virion. The VP7 protein is one of the five proteins (with VP1, VP3, VP4, and VP6) which form the inner capsid of the virus. In Bluetongue virus 1 (isolate Australia) (BTV 1), this protein is Core protein VP7 (Segment-7).